Here is a 402-residue protein sequence, read N- to C-terminus: Mannonate dehydratase 1 (402 aa).

Belongs to the mannonate dehydratase family. The cofactor is Fe(2+). Mn(2+) serves as cofactor.

It catalyses the reaction D-mannonate = 2-dehydro-3-deoxy-D-gluconate + H2O. It functions in the pathway carbohydrate metabolism; pentose and glucuronate interconversion. Catalyzes the dehydration of D-mannonate. The sequence is that of Mannonate dehydratase 1 (uxuA1) from Agrobacterium fabrum (strain C58 / ATCC 33970) (Agrobacterium tumefaciens (strain C58)).